A 220-amino-acid polypeptide reads, in one-letter code: Flavin-dependent thymidylate synthase (220 aa).

In terms of domain architecture, ThyX spans 1–208 (MKIDILDKGF…PWTFEAFLKY (208 aa)). FAD is bound by residues Thr-55, 78 to 80 (RHR), and Glu-86. DUMP-binding positions include 75 to 78 (QWFR), 86 to 90 (ELSGR), and Arg-147. A ThyX motif motif is present at residues 78–88 (RHRIASYNELS). FAD is bound by residues 163-165 (NAR) and Asn-169. Arg-174 serves as a coordination point for dUMP. Catalysis depends on Arg-174, which acts as the Involved in ionization of N3 of dUMP, leading to its activation.

It belongs to the thymidylate synthase ThyX family. In terms of assembly, homotetramer. FAD serves as cofactor.

It catalyses the reaction dUMP + (6R)-5,10-methylene-5,6,7,8-tetrahydrofolate + NADPH + H(+) = dTMP + (6S)-5,6,7,8-tetrahydrofolate + NADP(+). Its pathway is pyrimidine metabolism; dTTP biosynthesis. Its function is as follows. Catalyzes the reductive methylation of 2'-deoxyuridine-5'-monophosphate (dUMP) to 2'-deoxythymidine-5'-monophosphate (dTMP) while utilizing 5,10-methylenetetrahydrofolate (mTHF) as the methyl donor, and NADPH and FADH(2) as the reductant. The polypeptide is Flavin-dependent thymidylate synthase (Thermotoga sp. (strain RQ2)).